We begin with the raw amino-acid sequence, 334 residues long: Malate dehydrogenase (334 aa).

17–23 (GAAGQIG) is an NAD(+) binding site. Substrate contacts are provided by Arg-98 and Arg-104. Residues Asn-111, Gln-118, and 135-137 (VGN) contribute to the NAD(+) site. Asn-137 and Arg-168 together coordinate substrate. His-193 acts as the Proton acceptor in catalysis.

It belongs to the LDH/MDH superfamily. MDH type 2 family.

The catalysed reaction is (S)-malate + NAD(+) = oxaloacetate + NADH + H(+). Functionally, catalyzes the reversible oxidation of malate to oxaloacetate. This chain is Malate dehydrogenase, found in Deinococcus geothermalis (strain DSM 11300 / CIP 105573 / AG-3a).